The sequence spans 334 residues: 3-keto-steroid reductase/17-beta-hydroxysteroid dehydrogenase 7 (334 aa).

The Extracellular segment spans residues 1–229 (MRKVVLITGA…VTCPGVVMTN (229 aa)). 8–15 (TGASSGIG) is an NAD(+) binding site. N37 carries N-linked (GlcNAc...) asparagine glycosylation. S171 is a substrate binding site. The N-linked (GlcNAc...) asparagine glycan is linked to N178. Catalysis depends on Y193, which acts as the Proton acceptor. N-linked (GlcNAc...) asparagine glycosylation is present at N229. The chain crosses the membrane as a helical span at residues 230-250 (LTYGILPPFVWTLLLPVIWLL). The Cytoplasmic portion of the chain corresponds to 251 to 334 (RFFAHAFTVT…ITIQKSDHHS (84 aa)).

This sequence belongs to the short-chain dehydrogenases/reductases (SDR) family. ERG27 subfamily. Binds to the short form of prolactin receptor. Phosphorylated. Most abundant in ovaries of pregnant animals.

It localises to the endoplasmic reticulum membrane. It catalyses the reaction 17beta-estradiol + NADP(+) = estrone + NADPH + H(+). The catalysed reaction is a 3beta-hydroxysteroid + NADP(+) = a 3-oxosteroid + NADPH + H(+). It carries out the reaction 4alpha-methyl-5alpha-cholest-7-en-3beta-ol + NADP(+) = 4alpha-methyl-5alpha-cholest-7-en-3-one + NADPH + H(+). The enzyme catalyses 4alpha-methyl-5alpha-cholest-8-en-3-one + NADPH + H(+) = 4alpha-methyl-5alpha-cholest-8-en-3beta-ol + NADP(+). It catalyses the reaction 3-dehydro-4alpha-methylzymosterol + NADPH + H(+) = 4alpha-methylzymosterol + NADP(+). The catalysed reaction is zymosterone + NADPH + H(+) = zymosterol + NADP(+). It carries out the reaction 5alpha-cholest-8-en-3-one + NADPH + H(+) = 5alpha-cholest-8-en-3beta-ol + NADP(+). The enzyme catalyses 5alpha-androstane-3beta,17beta-diol + NADP(+) = 17beta-hydroxy-5alpha-androstan-3-one + NADPH + H(+). It catalyses the reaction 5alpha-androstane-3alpha,17beta-diol + NADP(+) = 17beta-hydroxy-5alpha-androstan-3-one + NADPH + H(+). It participates in steroid biosynthesis; estrogen biosynthesis. The protein operates within steroid biosynthesis; zymosterol biosynthesis; zymosterol from lanosterol: step 5/6. Bifunctional enzyme involved in steroid-hormone metabolism and cholesterol biosynthesis. Catalyzes the NADP(H)-dependent reduction of estrogens and androgens and regulates the biological potency of these steroids. Converts estrone (E1) to a more potent estrogen, 17beta-estradiol (E2). Converts dihydrotestosterone (DHT) to an inactive form. Also participates in the post-squalene cholesterol biosynthesis, as a 3-ketosteroid reductase. The polypeptide is 3-keto-steroid reductase/17-beta-hydroxysteroid dehydrogenase 7 (Hsd17b7) (Rattus norvegicus (Rat)).